Here is a 77-residue protein sequence, read N- to C-terminus: Sec-independent protein translocase protein TatA (77 aa).

Residues Met-1–Gly-21 traverse the membrane as a helical segment. A disordered region spans residues Met-43–Ala-77. Residues Asp-64–Ala-77 show a composition bias toward basic and acidic residues.

It belongs to the TatA/E family. As to quaternary structure, the Tat system comprises two distinct complexes: a TatABC complex, containing multiple copies of TatA, TatB and TatC subunits, and a separate TatA complex, containing only TatA subunits. Substrates initially bind to the TatABC complex, which probably triggers association of the separate TatA complex to form the active translocon.

It localises to the cell inner membrane. In terms of biological role, part of the twin-arginine translocation (Tat) system that transports large folded proteins containing a characteristic twin-arginine motif in their signal peptide across membranes. TatA could form the protein-conducting channel of the Tat system. In Burkholderia mallei (strain NCTC 10247), this protein is Sec-independent protein translocase protein TatA.